The following is an 87-amino-acid chain: Conotoxin QcMNCL-XIII0.1 (87 aa).

A signal peptide spans 1-18; the sequence is MNCLQLLLVLLLISTIAA. A propeptide spanning residues 19–34 is cleaved from the precursor; it reads LHGDGRVPQRRGRNIR.

Contains 4 disulfide bonds. In terms of tissue distribution, expressed by the venom duct.

The protein resides in the secreted. Functionally, may interact and inhibit Cav3.1/CACNA1G calcium channels. In a ex vivo model, shows ability to block nerve signal transduction. In Conus quercinus (Oak cone), this protein is Conotoxin QcMNCL-XIII0.1.